A 1233-amino-acid polypeptide reads, in one-letter code: Protein Jumonji (1233 aa).

A compositionally biased stretch (basic residues) spans 1–10 (MSKERPKRNI). Disordered stretches follow at residues 1–22 (MSKERPKRNIIQKEYDDSDGIP), 65–148 (NGQS…LSKR), 165–335 (PALP…VKYT), 355–379 (ETKLNHHKPSSPVNHTISGKLESSN), 423–451 (EGLRNSKRRLEETNHIDKIQSPTKRMKGA), and 466–542 (KPLL…GWGM). Over residues 84–96 (SQVSSTSNDISSS) the composition is skewed to low complexity. Positions 102–108 (PSRKRPR) match the Nuclear localization signal motif. Over residues 115-127 (FAQSQPNSPSTTP) the composition is skewed to polar residues. A sufficient for interaction with the PRC2 complex region spans residues 139-168 (ATQISDLSKRKPKTEDFLTFLCLRGSPALP). Positions 178 to 191 (QDDEDEEEEEEETE) are enriched in acidic residues. Polar residues-rich tracts occupy residues 195–208 (TATNNASSSCQSTP) and 216–228 (QVPNGQVFNGSSK). Over residues 229–262 (SLKEKEPAQKHKSKEATPGKEKNSEHKAESRKDQ) the composition is skewed to basic and acidic residues. The segment covering 268–285 (HPTTNTGSSTKGLTANNH) has biased composition (polar residues). Residues 309–318 (SSPSANAASA) are compositionally biased toward low complexity. The segment covering 365-379 (SPVNHTISGKLESSN) has biased composition (polar residues). Composition is skewed to basic and acidic residues over residues 423-440 (EGLRNSKRRLEETNHIDK) and 473-485 (LKKEVPEKNLERN). Over residues 506 to 519 (ENASCENRSTSQAE) the composition is skewed to polar residues. The span at 520 to 535 (SLHKPQDSMGKHEKGS) shows a compositional bias: basic and acidic residues. Positions 546-587 (IPILRPSTKEFHDPLIYIESVRAQVEKYGMCRVIPPPDWRPE) constitute a JmjN domain. In terms of domain architecture, ARID spans 610 to 702 (WGPNVQRLAC…YLLSYDSLSP (93 aa)). A GSGFP motif motif is present at residues 863–867 (GSGFP). In terms of domain architecture, JmjC spans 873–1037 (PFSRHGWNLT…MGFKTAKEMK (165 aa)). The disordered stretch occupies residues 1197 to 1233 (ENCISKPTPKRGPRKRATVDVPSSRLSSSSSSKSASS). Over residues 1219 to 1233 (SSRLSSSSSSKSASS) the composition is skewed to low complexity.

This sequence belongs to the JARID2 family. In terms of assembly, associates with the PRC2 complex.

The protein resides in the nucleus. Regulator of histone methyltransferase complexes that plays an essential role in embryonic development, including heart and liver development, neural tube fusion process and hematopoiesis. Acts as an accessory subunit for the core PRC2 (Polycomb repressive complex 2) complex, which mediates histone H3K27 (H3K27me3) trimethylation on chromatin. Binds DNA and mediates the recruitment of the PRC2 complex to target genes in embryonic stem cells, thereby playing a key role in stem cell differentiation and normal embryonic development. In cardiac cells, it is required to repress expression of cyclin-D1 (CCND1) by activating methylation of 'Lys-9' of histone H3 (H3K9me) by the GLP1/EHMT1 and G9a/EHMT2 histone methyltransferases. Also acts as a transcriptional repressor of ANF via its interaction with GATA4 and NKX2-5. Participates in the negative regulation of cell proliferation signaling. Does not have histone demethylase activity. The protein is Protein Jumonji (JARID2) of Gallus gallus (Chicken).